Consider the following 507-residue polypeptide: UDP-N-acetylhexosamine pyrophosphorylase-like protein 1 (507 aa).

Positions 56-91 (ACARPHGPPPDLAARLRPLPPERVGRASRSDPETRR) are disordered. A compositionally biased stretch (basic and acidic residues) spans 78–91 (RVGRASRSDPETRR). Positions 111 to 114 (LAGG) match the Substrate binding motif. Residues 111–114 (LAGG), Lys125, Gln199, and Gly225 each bind UTP. Asn226 provides a ligand contact to substrate. A UTP-binding site is contributed by Asp256. A Substrate binding motif is present at residues 306–307 (EY). Residue Lys380 participates in UTP binding. Position 410 (Lys410) interacts with substrate.

The protein belongs to the UDPGP type 1 family.

In Homo sapiens (Human), this protein is UDP-N-acetylhexosamine pyrophosphorylase-like protein 1 (UAP1L1).